Here is a 658-residue protein sequence, read N- to C-terminus: Glycogen debranching enzyme (658 aa).

Residue D335 is the Nucleophile of the active site. The active-site Proton donor is the E370. Basic and acidic residues predominate over residues 457 to 468 (NDANGEGNRDGT). The segment at 457–481 (NDANGEGNRDGTDSNFSNNHGTEGL) is disordered.

Belongs to the glycosyl hydrolase 13 family.

The enzyme catalyses Hydrolysis of (1-&gt;6)-alpha-D-glucosidic linkages to branches with degrees of polymerization of three or four glucose residues in limit dextrin.. It participates in glycan degradation; glycogen degradation. Its function is as follows. Removes maltotriose and maltotetraose chains that are attached by 1,6-alpha-linkage to the limit dextrin main chain, generating a debranched limit dextrin. This Pectobacterium atrosepticum (strain SCRI 1043 / ATCC BAA-672) (Erwinia carotovora subsp. atroseptica) protein is Glycogen debranching enzyme.